Consider the following 194-residue polypeptide: Holliday junction branch migration complex subunit RuvA (194 aa).

Residues 1 to 64 (MIARLSGILV…EDAQLLYGFG (64 aa)) are domain I. The segment at 65–141 (SDQERATFRQ…FAIDGGTALA (77 aa)) is domain II. Positions 141–144 (AGSN) are flexible linker. Residues 145-194 (PAKSASSDVLNALLALGYNEREALAAVKQLPADIAVAEGIKLSLKSLSKT) form a domain III region.

Belongs to the RuvA family. As to quaternary structure, homotetramer. Forms an RuvA(8)-RuvB(12)-Holliday junction (HJ) complex. HJ DNA is sandwiched between 2 RuvA tetramers; dsDNA enters through RuvA and exits via RuvB. An RuvB hexamer assembles on each DNA strand where it exits the tetramer. Each RuvB hexamer is contacted by two RuvA subunits (via domain III) on 2 adjacent RuvB subunits; this complex drives branch migration. In the full resolvosome a probable DNA-RuvA(4)-RuvB(12)-RuvC(2) complex forms which resolves the HJ.

The protein resides in the cytoplasm. Functionally, the RuvA-RuvB-RuvC complex processes Holliday junction (HJ) DNA during genetic recombination and DNA repair, while the RuvA-RuvB complex plays an important role in the rescue of blocked DNA replication forks via replication fork reversal (RFR). RuvA specifically binds to HJ cruciform DNA, conferring on it an open structure. The RuvB hexamer acts as an ATP-dependent pump, pulling dsDNA into and through the RuvAB complex. HJ branch migration allows RuvC to scan DNA until it finds its consensus sequence, where it cleaves and resolves the cruciform DNA. This chain is Holliday junction branch migration complex subunit RuvA, found in Methylobacillus flagellatus (strain ATCC 51484 / DSM 6875 / VKM B-1610 / KT).